A 403-amino-acid chain; its full sequence is Phosphoglycerate kinase (403 aa).

Substrate-binding positions include Asp21–Asn23, Arg36, His59–Arg62, Arg119, and Arg154. ATP-binding positions include Lys207, Gly299, Glu330, and Gly357–Ala360.

It belongs to the phosphoglycerate kinase family. As to quaternary structure, monomer.

The protein resides in the cytoplasm. It carries out the reaction (2R)-3-phosphoglycerate + ATP = (2R)-3-phospho-glyceroyl phosphate + ADP. It functions in the pathway carbohydrate degradation; glycolysis; pyruvate from D-glyceraldehyde 3-phosphate: step 2/5. The polypeptide is Phosphoglycerate kinase (Chlamydia caviae (strain ATCC VR-813 / DSM 19441 / 03DC25 / GPIC) (Chlamydophila caviae)).